The sequence spans 1445 residues: 3'-5' RNA helicase YTHDC2 (1445 aa).

The disordered stretch occupies residues 1 to 50 (MSRPSSVSPRPPAPSGGGTGGGGGGSGGGGGGGGGGPASCGPGGGGRAKG). Positions 15–48 (SGGGTGGGGGGSGGGGGGGGGGPASCGPGGGGRA) are enriched in gly residues. The region spanning 53 to 121 (DIRIDEEVKI…NRYLTVKKKD (69 aa)) is the R3H domain. The Helicase ATP-binding domain maps to 218–384 (VKIIKENKVV…FGSCPVIYIQ (167 aa)). An ATP-binding site is contributed by 231-238 (GETGSGKT). Residues 331 to 334 (DEVH) carry the DEAH box motif. ANK repeat units lie at residues 521–553 (TSATALMVAAGRGFTSQVEQLISMGANVHSKAS) and 554–586 (NGWMALDWAKHFGQTEIVDLLESYSASLEFGNL). A Helicase C-terminal domain is found at 627–799 (LLYNICHSCD…ELCLHTKLLA (173 aa)). 3 positions are modified to phosphoserine: Ser1104, Ser1105, and Ser1107. The segment covering 1179–1189 (EQSAGLQQPSG) has biased composition (polar residues). The tract at residues 1179–1303 (EQSAGLQQPS…SPSPRPNMPI (125 aa)) is disordered. Residues 1246–1264 (KYKDRGILHPKRSTDDRSD) show a composition bias toward basic and acidic residues. The segment covering 1265-1279 (QSSVKSTDSSSYPSP) has biased composition (low complexity). Residues Ser1278, Ser1282, and Ser1296 each carry the phosphoserine modification. The region spanning 1303–1433 (IRYFIMKSSN…QVGEQLLQLW (131 aa)) is the YTH domain. RNA-binding positions include 1309 to 1311 (KSS), Trp1325, and Trp1375.

The protein belongs to the DEAD box helicase family. DEAH subfamily. As to quaternary structure, interacts with MEIOC; binds transcripts that regulate the mitotic cell cycle inhibiting progression into metaphase, thereby allowing meiotic prophase to proceed normally. Interacts (via ANK repeats) with XRN1. Interacts with ZCCHC4. Associates with the small ribosomal subunit. Interacts with RBM46. As to expression, present in male and female germ cells (at protein level). Highly expressed in testis. Not detected in spermatogonia next to the tubule wall but is strongly expressed in spermatocytes, suggesting that it is up-regulated in germ cells upon entry into meiosis (at protein level).

The protein resides in the cytoplasm. The protein localises to the perinuclear region. The enzyme catalyses ATP + H2O = ADP + phosphate + H(+). Functionally, 3'-5' RNA helicase that plays a key role in the male and female germline by promoting transition from mitotic to meiotic divisions in stem cells. Specifically recognizes and binds N6-methyladenosine (m6A)-containing RNAs, a modification present at internal sites of mRNAs and some non-coding RNAs that plays a role in the efficiency of RNA processing and stability. Essential for ensuring a successful progression of the meiotic program in the germline by regulating the level of m6A-containing RNAs. Acts by binding and promoting degradation of m6A-containing mRNAs: the 3'-5' RNA helicase activity is required for this process and RNA degradation may be mediated by XRN1 exoribonuclease. Required for both spermatogenesis and oogenesis. The protein is 3'-5' RNA helicase YTHDC2 of Mus musculus (Mouse).